Reading from the N-terminus, the 196-residue chain is Agamous-like MADS-box protein AGL27 (196 aa).

Residues 1-61 (MGRRKIEIKR…GKLYDSSSGD (61 aa)) form the MADS-box domain. Positions 80–170 (ALDLEEKIQN…ASQMGKNTLL (91 aa)) constitute a K-box domain. Positions 175–196 (ERGMFPGSSSGNKIPETLPLLN) are disordered.

As to quaternary structure, interacts with AGL39, AGL97 and AGL74. Expressed in most plant tissues, embryo, seedlings, roots, leaves, stems, inflorescence, pollen, siliques and flowers.

It localises to the nucleus. Functionally, probable transcription factor involved in the negative regulation of flowering time in both long and short days, probably through the photoperiodic and vernalization pathways. Prevents premature flowering. This is Agamous-like MADS-box protein AGL27 (AGL27) from Arabidopsis thaliana (Mouse-ear cress).